The following is a 394-amino-acid chain: [Pyruvate dehydrogenase (acetyl-transferring)] kinase 1, mitochondrial (394 aa).

The N-terminal 20 residues, 1–20 (MWKIMRSWKCGGMRWAHRQR), are a transit peptide targeting the mitochondrion. In terms of domain architecture, Histidine kinase spans 126-386 (AYPYELHNPP…DVYIKLKGPS (261 aa)). Histidine 148 is subject to Phosphohistidine; by autocatalysis. ATP contacts are provided by residues 267–274 (EVFKNAFE), aspartate 304, 323–324 (ST), and 347–352 (GMGFGL).

This sequence belongs to the PDK/BCKDK protein kinase family. As to quaternary structure, interacts with PKP2.

Its subcellular location is the mitochondrion matrix. The catalysed reaction is L-seryl-[pyruvate dehydrogenase E1 alpha subunit] + ATP = O-phospho-L-seryl-[pyruvate dehydrogenase E1 alpha subunit] + ADP + H(+). In terms of biological role, inhibits the mitochondrial pyruvate dehydrogenase complex by phosphorylation of the E1 alpha subunit (PDA1), thus contributing to the regulation of glucose metabolism. Also involved in telomere maintenance. In Saccharomyces cerevisiae (strain ATCC 204508 / S288c) (Baker's yeast), this protein is [Pyruvate dehydrogenase (acetyl-transferring)] kinase 1, mitochondrial.